A 321-amino-acid polypeptide reads, in one-letter code: Glucokinase (321 aa).

8–13 (GDVGGT) lines the ATP pocket.

This sequence belongs to the bacterial glucokinase family.

The protein localises to the cytoplasm. The enzyme catalyses D-glucose + ATP = D-glucose 6-phosphate + ADP + H(+). The chain is Glucokinase from Escherichia fergusonii (strain ATCC 35469 / DSM 13698 / CCUG 18766 / IAM 14443 / JCM 21226 / LMG 7866 / NBRC 102419 / NCTC 12128 / CDC 0568-73).